Here is a 186-residue protein sequence, read N- to C-terminus: ATP synthase subunit delta (186 aa).

This sequence belongs to the ATPase delta chain family. In terms of assembly, F-type ATPases have 2 components, F(1) - the catalytic core - and F(0) - the membrane proton channel. F(1) has five subunits: alpha(3), beta(3), gamma(1), delta(1), epsilon(1). F(0) has three main subunits: a(1), b(2) and c(10-14). The alpha and beta chains form an alternating ring which encloses part of the gamma chain. F(1) is attached to F(0) by a central stalk formed by the gamma and epsilon chains, while a peripheral stalk is formed by the delta and b chains.

It localises to the cell inner membrane. Functionally, f(1)F(0) ATP synthase produces ATP from ADP in the presence of a proton or sodium gradient. F-type ATPases consist of two structural domains, F(1) containing the extramembraneous catalytic core and F(0) containing the membrane proton channel, linked together by a central stalk and a peripheral stalk. During catalysis, ATP synthesis in the catalytic domain of F(1) is coupled via a rotary mechanism of the central stalk subunits to proton translocation. Its function is as follows. This protein is part of the stalk that links CF(0) to CF(1). It either transmits conformational changes from CF(0) to CF(1) or is implicated in proton conduction. The protein is ATP synthase subunit delta of Azorhizobium caulinodans (strain ATCC 43989 / DSM 5975 / JCM 20966 / LMG 6465 / NBRC 14845 / NCIMB 13405 / ORS 571).